The sequence spans 340 residues: MKVTLKELSQLLGATIKGDATLEITSVATLEDATQGQLSFLANSKYRAQLEATQASAVLLSEKEASCYHGNALIVSDPYVGFARVAQLLDTTPKETPGIHPSAQIDTSAILGDGAAIGANAVIGANVILGENVQIGPGCVVGESSIIGSNTRLWANVSVYHNVHIGHDCIVHSGTVIGSDGFGYANERGNWVKIPQTGGVRIGNHVEIGACTSIDRGALSHTEIHDGVIIDNQVQIAHNVVIGQNTAMAGGSIIAGSSTIGKYCIIGGGSAVAGHLSVADGVHISGGTNVTSVIREKGVYSSATIAMENKLWRRNTVRFRQLDELFSRVKTLEKSAKGSE.

Catalysis depends on His238, which acts as the Proton acceptor.

The protein belongs to the transferase hexapeptide repeat family. LpxD subfamily. Homotrimer.

It catalyses the reaction a UDP-3-O-[(3R)-3-hydroxyacyl]-alpha-D-glucosamine + a (3R)-hydroxyacyl-[ACP] = a UDP-2-N,3-O-bis[(3R)-3-hydroxyacyl]-alpha-D-glucosamine + holo-[ACP] + H(+). Its pathway is bacterial outer membrane biogenesis; LPS lipid A biosynthesis. Its function is as follows. Catalyzes the N-acylation of UDP-3-O-acylglucosamine using 3-hydroxyacyl-ACP as the acyl donor. Is involved in the biosynthesis of lipid A, a phosphorylated glycolipid that anchors the lipopolysaccharide to the outer membrane of the cell. This chain is UDP-3-O-acylglucosamine N-acyltransferase, found in Shewanella frigidimarina (strain NCIMB 400).